The sequence spans 361 residues: 3-galactosyl-N-acetylglucosaminide 4-alpha-L-fucosyltransferase FUT3 (361 aa).

Residues 1–15 (MDPLGAAKPQWPWRR) are Cytoplasmic-facing. Residues 16–34 (CLAALLFQLLVAVCFFSYL) form a helical; Signal-anchor for type II membrane protein membrane-spanning segment. At 35-361 (RVSRDDATGS…TVRSIAAWFT (327 aa)) the chain is on the lumenal side. The disordered stretch occupies residues 39 to 58 (DDATGSPRAPSGSSRQDTTP). N-linked (GlcNAc...) asparagine glycans are attached at residues Asn154 and Asn185.

This sequence belongs to the glycosyltransferase 10 family. In terms of processing, glycosylated. As to expression, highly expressed in stomach, colon, small intestine, lung and kidney and to a lesser extent in salivary gland, bladder, uterus and liver.

It is found in the golgi apparatus. The protein localises to the golgi stack membrane. The enzyme catalyses a beta-D-galactosyl-(1-&gt;3)-N-acetyl-beta-D-glucosaminyl derivative + GDP-beta-L-fucose = a beta-D-galactosyl-(1-&gt;3)-[alpha-L-fucosyl-(1-&gt;4)]-N-acetyl-beta-D-glucosaminyl derivative + GDP + H(+). The catalysed reaction is an N-acetyl-alpha-neuraminyl-(2-&gt;3)-beta-D-galactosyl-(1-&gt;4)-N-acetyl-beta-D-glucosaminyl derivative + GDP-beta-L-fucose = an alpha-Neu5Ac-(2-&gt;3)-beta-D-Gal-(1-&gt;4)-[alpha-L-Fuc-(1-&gt;3)]-beta-D-GlcNAc derivative + GDP + H(+). It carries out the reaction a beta-D-galactosyl-(1-&gt;4)-N-acetyl-beta-D-glucosaminyl derivative + GDP-beta-L-fucose = a beta-D-galactosyl-(1-&gt;4)-[alpha-L-fucosyl-(1-&gt;3)]-N-acetyl-beta-D-glucosaminyl derivative + GDP + H(+). It catalyses the reaction an alpha-Neu5Ac-(2-&gt;3)-beta-D-Gal-(1-&gt;4)-beta-D-GlcNAc-(1-&gt;3)-beta-D-Gal-(1-&gt;4)-[alpha-L-Fuc-(1-&gt;3)]-beta-D-GlcNAc derivative + GDP-beta-L-fucose = an alpha-Neu5Ac-(2-&gt;3)-beta-D-Gal-(1-&gt;4)-[alpha-L-Fuc-(1-&gt;3)]-beta-D-GlcNAc-(1-&gt;3)-beta-D-Gal-(1-&gt;4)-[alpha-L-Fuc-(1-&gt;3)]-beta-D-GlcNAc derivative + GDP + H(+). The enzyme catalyses Lc4Cer + GDP-beta-L-fucose = a lactoside III(4)-a-Fuc-Lc4Cer + GDP + H(+). The catalysed reaction is a beta-D-Gal-(1-&gt;3)-beta-D-GlcNAc-(1-&gt;3)-beta-D-Gal-(1-&gt;4)-beta-D-Glc-(1&lt;-&gt;1')-Cer(d18:1(4E)) + GDP-beta-L-fucose = a III(4)-a-Fuc-Lc4Cer(d18:1(4E)) + GDP + H(+). It carries out the reaction N-acetyl-alpha-neuraminosyl-(2-&gt;3)-beta-D-galactosyl-(1-&gt;3)-[N-acetyl-alpha-neuraminosyl-(2-&gt;6)]-N-acetyl-beta-D-glucosaminyl-(1-&gt;3)-beta-D-galactosyl-(1-&gt;4)-beta-D-glucosyl-(1&lt;-&gt;1')-N-acyl-sphing-4-enine + GDP-beta-L-fucose = N-acetyl-alpha-neuraminosyl-(2-&gt;3)-beta-D-galactosyl-(1-&gt;3)-alpha-L-fucosyl-(1-&gt;4)-[N-acetyl-alpha-neuraminosyl-(2-&gt;6)-N-acetyl-beta-D-glucosaminyl-(1-&gt;3)]-beta-D-galactosyl-(1-&gt;4)-beta-D-glucosyl-(1&lt;-&gt;1')-N-acyl-sphing-4-enine + GDP + H(+). It catalyses the reaction N-acetyl-alpha-neuraminosyl-(2-&gt;3)-beta-D-galactosyl-(1-&gt;3)-N-acetyl-beta-D-glucosaminyl-(1-&gt;3)-beta-D-galactosyl-(1-&gt;4)-beta-D-glucosyl-(1&lt;-&gt;1')-N-acyl-sphing-4-enine + GDP-beta-L-fucose = N-acetyl-alpha-neuraminosyl-(2-&gt;3)-beta-D-galactosyl-(1-&gt;3)-alpha-L-fucosyl-(1-&gt;4)-[N-acetyl-beta-D-glucosaminyl-(1-&gt;3)]-beta-D-galactosyl-(1-&gt;4)-beta-D-glucosyl-(1&lt;-&gt;1')-N-acyl-sphing-4-enine + GDP + H(+). The enzyme catalyses beta-D-galactosyl-(1-&gt;3)-N-acetyl-D-glucosamine + GDP-beta-L-fucose = beta-D-galactosyl-(1-&gt;3)-[alpha-L-fucosyl-(1-&gt;4)]-N-acetyl-D-glucosamine + GDP + H(+). The catalysed reaction is alpha-L-Fuc-(1-&gt;2)-beta-D-Gal-(1-&gt;3)-D-GlcNAc + GDP-beta-L-fucose = alpha-L-Fuc-(1-&gt;2)-beta-D-Gal-(1-&gt;3)-[alpha-L-Fuc-(1-&gt;4)]-D-GlcNAc + GDP + H(+). It carries out the reaction alpha-L-Fuc-(1-&gt;2)-beta-D-Gal-(1-&gt;4)-D-GlcNAc + GDP-beta-L-fucose = alpha-L-Fuc-(1-&gt;2)-beta-D-Gal-(1-&gt;4)-[alpha-L-Fuc-(1-&gt;3)]-D-GlcNAc + GDP + H(+). It catalyses the reaction beta-D-galactosyl-(1-&gt;4)-N-acetyl-D-glucosamine + GDP-beta-L-fucose = beta-D-galactosyl-(1-&gt;4)-[alpha-L-fucosyl-(1-&gt;3)]-N-acetyl-D-glucosamine + GDP + H(+). The enzyme catalyses lactose + GDP-beta-L-fucose = beta-D-galactosyl-(1-&gt;4)-[alpha-L-fucosyl-(1-&gt;3)]-D-glucose + GDP + H(+). The catalysed reaction is an alpha-Neu5Ac-(2-&gt;3)-beta-D-Gal-(1-&gt;3)-D-GlcNAc derivative + GDP-beta-L-fucose = an alpha-Neu5Ac-(2-&gt;3)-beta-D-Gal-(1-&gt;3)-[alpha-L-Fuc-(1-&gt;4)]-beta-D-GlcNAc derivative + GDP + H(+). It functions in the pathway protein modification; protein glycosylation. Catalyzes the transfer of L-fucose, from a guanosine diphosphate-beta-L-fucose, to both the subterminal N-acetyl glucosamine (GlcNAc) of type 1 chain (beta-D-Gal-(1-&gt;3)-beta-D-GlcNAc) glycolipids and oligosaccharides via an alpha(1,4) linkage, and the subterminal glucose (Glc) or GlcNAc of type 2 chain (beta-D-Gal-(1-&gt;4)-beta-D-GlcNAc) oligosaccharides via an alpha(1,3) linkage, independently of the presence of terminal alpha-L-fucosyl-(1,2) moieties on the terminal galactose of these acceptors. Through its catalytic activity, participates in the synthesis of antigens of the Lewis blood group system, i.e. Lewis a (Le(a)), lewis b (Le(b)), Lewis x/SSEA-1 (Le(x)) and lewis y (Le(y)) antigens. Also catalyzes the transfer of L-fucose to subterminal GlcNAc of sialyl- and disialyl-lactotetraosylceramide to produce sialyl Lewis a (sLe(a)) and disialyl Lewis a via an alpha(1,4) linkage and therefore may regulate cell surface sLe(a) expression and consequently regulates adhesive properties to E-selectin, cell proliferation and migration. Catalyzes the transfer of an L-fucose to 3'-sialyl-N-acetyllactosamine by an alpha(1,3) linkage, which allows the formation of sialyl-Lewis x structure and therefore may regulate the sialyl-Lewis x surface antigen expression and consequently adhesive properties to E-selectin. Prefers type 1 chain over type 2 acceptors. Type 1 tetrasaccharide is a better acceptor than type 1 disaccharide suggesting that a beta anomeric configuration of GlcNAc in the substrate is preferred. Lewis-positive (Le(+)) individuals have an active enzyme while Lewis-negative (Le(-)) individuals have an inactive enzyme. The polypeptide is 3-galactosyl-N-acetylglucosaminide 4-alpha-L-fucosyltransferase FUT3 (Homo sapiens (Human)).